We begin with the raw amino-acid sequence, 262 residues long: Nodulation protein J (262 aa).

An ABC transmembrane type-2 domain is found at 33-259 (ASILGNLADP…FLSTALLRRR (227 aa)). 7 helical membrane passes run 35–55 (ILGN…GLGM), 62–82 (GVSY…MTAS), 102–122 (AILH…AWAA), 127–147 (LAGT…WVSL), 148–168 (LYAL…AMIV), 177–197 (YFIF…GAVF), and 231–251 (LVHV…PFFL).

Belongs to the ABC-2 integral membrane protein family. Lipooligosaccharide exporter (TC 3.A.1.102) subfamily. As to quaternary structure, the complex is composed of two ATP-binding proteins (NodI) and two transmembrane proteins (NodJ).

The protein resides in the cell inner membrane. In terms of biological role, part of the ABC transporter complex NodIJ involved in the export of the nodulation factors (Nod factors), the bacterial signal molecules that induce symbiosis and subsequent nodulation induction. Nod factors are LCO (lipo-chitin oligosaccharide), a modified beta-1,4-linked N-acetylglucosamine oligosaccharide. This subunit encodes the transporter. The protein is Nodulation protein J (nodJ) of Rhizobium meliloti (strain 1021) (Ensifer meliloti).